Consider the following 165-residue polypeptide: Growth arrest and DNA damage-inducible protein GADD45 alpha (165 aa).

Residue T2 is modified to Phosphothreonine.

This sequence belongs to the GADD45 family. As to quaternary structure, interacts with AURKA, GADD45GIP1 and PCNA. Interacts with MAPK14.

The protein localises to the nucleus. In terms of biological role, might affect PCNA interaction with some CDK (cell division protein kinase) complexes; stimulates DNA excision repair in vitro and inhibits entry of cells into S phase. In T-cells, functions as a regulator of p38 MAPKs by inhibiting p88 phosphorylation and activity. This is Growth arrest and DNA damage-inducible protein GADD45 alpha (Gadd45a) from Mus musculus (Mouse).